Here is a 425-residue protein sequence, read N- to C-terminus: Serine hydroxymethyltransferase 2 (425 aa).

(6S)-5,6,7,8-tetrahydrofolate is bound by residues Leu121 and 125–127 (GHL). Lys230 is modified (N6-(pyridoxal phosphate)lysine).

This sequence belongs to the SHMT family. Homodimer. Pyridoxal 5'-phosphate serves as cofactor.

Its subcellular location is the cytoplasm. The catalysed reaction is (6R)-5,10-methylene-5,6,7,8-tetrahydrofolate + glycine + H2O = (6S)-5,6,7,8-tetrahydrofolate + L-serine. Its pathway is one-carbon metabolism; tetrahydrofolate interconversion. It participates in amino-acid biosynthesis; glycine biosynthesis; glycine from L-serine: step 1/1. Functionally, catalyzes the reversible interconversion of serine and glycine with tetrahydrofolate (THF) serving as the one-carbon carrier. This reaction serves as the major source of one-carbon groups required for the biosynthesis of purines, thymidylate, methionine, and other important biomolecules. Also exhibits THF-independent aldolase activity toward beta-hydroxyamino acids, producing glycine and aldehydes, via a retro-aldol mechanism. The protein is Serine hydroxymethyltransferase 2 of Mycobacterium tuberculosis (strain CDC 1551 / Oshkosh).